Consider the following 365-residue polypeptide: DNA N6-methyl methyltransferase (365 aa).

Belongs to the MT-A70-like family.

The catalysed reaction is a 2'-deoxyadenosine in DNA + S-adenosyl-L-methionine = an N(6)-methyl-2'-deoxyadenosine in DNA + S-adenosyl-L-homocysteine + H(+). Methylates DNA on the 6th position of adenine (N(6)-methyladenosine). N(6)-methyladenosine (m6A) DNA is involved in epigenetic transgenerational inheritance. The chain is DNA N6-methyl methyltransferase from Caenorhabditis elegans.